We begin with the raw amino-acid sequence, 179 residues long: Putative mediator of RNA polymerase II transcription subunit 28 (179 aa).

A coiled-coil region spans residues 81-119; it reads SAEKNKIQLKQEIYKVKKEIENKDRLIERYKNKVKEWKY.

The protein belongs to the Mediator complex subunit 28 family. Component of the Mediator complex.

The protein resides in the nucleus. Its function is as follows. Component of the Mediator complex, a coactivator involved in the regulated transcription of nearly all RNA polymerase II-dependent genes. Mediator functions as a bridge to convey information from gene-specific regulatory proteins to the basal RNA polymerase II transcription machinery. Mediator is recruited to promoters by direct interactions with regulatory proteins and serves as a scaffold for the assembly of a functional preinitiation complex with RNA polymerase II and the general transcription factors. The sequence is that of Putative mediator of RNA polymerase II transcription subunit 28 (med28) from Dictyostelium discoideum (Social amoeba).